Consider the following 604-residue polypeptide: Netrin-1 (604 aa).

An N-terminal signal peptide occupies residues 1–24 (MMRAVWEALAALAAVACLVGAVRG). The Laminin N-terminal domain occupies 47–284 (HPRRCIPDFV…AVSDLQVGGR (238 aa)). Residues Asn95, Asn116, and Asn131 are each glycosylated (N-linked (GlcNAc...) asparagine). 15 cysteine pairs are disulfide-bonded: Cys119–Cys152, Cys285–Cys294, Cys287–Cys304, Cys306–Cys315, Cys318–Cys338, Cys341–Cys350, Cys343–Cys368, Cys371–Cys380, Cys383–Cys401, Cys404–Cys416, Cys406–Cys423, Cys425–Cys434, Cys437–Cys451, Cys472–Cys544, and Cys491–Cys601. 3 Laminin EGF-like domains span residues 285–340 (CKCN…ECVA), 341–403 (CNCN…ACKA), and 404–453 (CDCH…PCIK). A glycan (N-linked (GlcNAc...) asparagine) is linked at Asn417. One can recognise an NTR domain in the interval 472-601 (CDSYCKASKG…FQQREKKGKC (130 aa)). The short motif at 530-532 (RGD) is the Cell attachment site element.

As to quaternary structure, binds to its receptors; DCC, UNC5A, UNC5B, UNC5C and probably UNC5D. Binds to its receptor; DSCAM. Interacts with DCC. Interacts with APP. As to expression, widely expressed in normal adult tissues with highest levels in heart, small intestine, colon, liver and prostate. Reduced expression in brain tumors and neuroblastomas. Expressed in epididymis (at protein level).

It localises to the secreted. The protein resides in the cytoplasm. In terms of biological role, netrins control guidance of CNS commissural axons and peripheral motor axons. Its association with either DCC or some UNC5 receptors will lead to axon attraction or repulsion, respectively. Binding to UNC5C might cause dissociation of UNC5C from polymerized TUBB3 in microtubules and thereby lead to increased microtubule dynamics and axon repulsion. Involved in dorsal root ganglion axon projection towards the spinal cord. It also serves as a survival factor via its association with its receptors which prevent the initiation of apoptosis. Involved in tumorigenesis by regulating apoptosis. The protein is Netrin-1 (NTN1) of Homo sapiens (Human).